Here is a 640-residue protein sequence, read N- to C-terminus: Glycosyltransferase-like protein gnt14 (640 aa).

The Cytoplasmic segment spans residues 1 to 14 (MFGFKTTKNKKRVR). A helical; Signal-anchor for type II membrane protein transmembrane segment spans residues 15 to 35 (LLVVAIGVMIFFMCLSNFSSI). At 36–640 (QSRQSSSTDT…TENCYSNDHW (605 aa)) the chain is on the extracellular side. Disordered regions lie at residues 63 to 184 (PSIN…PLSS) and 254 to 277 (NSNN…NNNY). The segment covering 65–171 (ININNSENNI…NININNNNKP (107 aa)) has biased composition (low complexity). An N-linked (GlcNAc...) asparagine glycan is attached at N68. N410 and N539 each carry an N-linked (GlcNAc...) asparagine glycan.

The protein belongs to the glycosyltransferase 8 family. Highly divergent.

It localises to the membrane. This chain is Glycosyltransferase-like protein gnt14 (gnt14), found in Dictyostelium discoideum (Social amoeba).